The following is a 424-amino-acid chain: Serpin E3 (424 aa).

The signal sequence occupies residues 1–20 (MPPFLITLFLFHSCCLRANG). Asn46 carries N-linked (GlcNAc...) asparagine glycosylation. The segment at 143–174 (DLSEPNSTAIQTSEGASRETAGGGPSEGPGGW) is disordered. Residues 146–157 (EPNSTAIQTSEG) are compositionally biased toward polar residues. Residues 163 to 173 (AGGGPSEGPGG) are compositionally biased toward gly residues.

Belongs to the serpin family.

The protein localises to the secreted. Functionally, probable serine protease inhibitor. The polypeptide is Serpin E3 (SERPINE3) (Homo sapiens (Human)).